The sequence spans 242 residues: C-reactive protein 1.1 (242 aa).

A signal peptide spans 1–24 (MKTFHGPTCGTAVSLCLLLFLTSA). One can recognise a Pentraxin (PTX) domain in the interval 30–241 (ITSKVKFPPS…GVVLSPNEIC (212 aa)). Residues Thr-60 and Tyr-63 each coordinate phosphocholine. Intrachain disulfides connect Cys-62/Cys-125 and Cys-112/Cys-144. Residues Asp-85 and Asn-86 each contribute to the Ca(2+) site. A glycan (N-linked (GlcNAc...) asparagine) is linked at Asn-147. Gln-169, Asp-170, and Gln-180 together coordinate Ca(2+). A disulfide bond links Cys-207 and Cys-241.

Belongs to the pentraxin family. In terms of assembly, homopentamer. Pentraxin (or pentaxin) have a discoid arrangement of 5 non-covalently bound subunits. Ca(2+) serves as cofactor.

It localises to the secreted. In terms of biological role, might serve the role of immunoglobulins. The protein is C-reactive protein 1.1 of Limulus polyphemus (Atlantic horseshoe crab).